A 341-amino-acid polypeptide reads, in one-letter code: Anthranilate phosphoribosyltransferase (341 aa).

Residues Gly-83, Ser-91, 93 to 96, 111 to 115, and Ser-123 contribute to the 5-phospho-alpha-D-ribose 1-diphosphate site; these read NTST and KHGNR. Gly-83 provides a ligand contact to anthranilate. A Mg(2+)-binding site is contributed by Ser-95. Asn-114 serves as a coordination point for anthranilate. Arg-169 contacts anthranilate. Mg(2+) is bound by residues Asp-228 and Glu-229.

This sequence belongs to the anthranilate phosphoribosyltransferase family. In terms of assembly, homodimer. Mg(2+) serves as cofactor.

The enzyme catalyses N-(5-phospho-beta-D-ribosyl)anthranilate + diphosphate = 5-phospho-alpha-D-ribose 1-diphosphate + anthranilate. It participates in amino-acid biosynthesis; L-tryptophan biosynthesis; L-tryptophan from chorismate: step 2/5. Its function is as follows. Catalyzes the transfer of the phosphoribosyl group of 5-phosphorylribose-1-pyrophosphate (PRPP) to anthranilate to yield N-(5'-phosphoribosyl)-anthranilate (PRA). The polypeptide is Anthranilate phosphoribosyltransferase (Hyphomonas neptunium (strain ATCC 15444)).